We begin with the raw amino-acid sequence, 398 residues long: MAVKVVMPKLGMAMKQGEVSIWNKKVGDPVEKGESIASIQSEKIEMEIEAPEKGTLIDIKVKEGEEVPPGTAICYIGDANESVQEEAGAPVAEDNMPQAVQPVKQENKPAASKKDRMKISPVARKIAEKAGLDLKQLKGTGPGGRIVKDDVTKALAEQKKDQAKPVSEQKAQEIPVTGMRKVIAARMQESLANSAQLTITMKADITKLATLQKQLSPTAEERYGTKLTITHFVSRAAVLALQAHPVLNSFYQNERIITHPHVHLGMAVALENGLVVPVIRHAEKLSLIELAQSISENAKKAREGRAGSEELQGSTFSITNLGAFGVEHFTPILNPPETGILGIGASYDTPVYQGEEIVRSTILPLSLTFDHRACDGAPAAAFLKAMKTYLEEPAALIL.

In terms of domain architecture, Lipoyl-binding spans 2–77 (AVKVVMPKLG…PPGTAICYIG (76 aa)). Lysine 43 is subject to N6-lipoyllysine. The region spanning 118-155 (KISPVARKIAEKAGLDLKQLKGTGPGGRIVKDDVTKAL) is the Peripheral subunit-binding (PSBD) domain. Active-site residues include histidine 371 and aspartate 375.

It belongs to the 2-oxoacid dehydrogenase family. It depends on (R)-lipoate as a cofactor.

It carries out the reaction N(6)-[(R)-dihydrolipoyl]-L-lysyl-[protein] + acetyl-CoA = N(6)-[(R)-S(8)-acetyldihydrolipoyl]-L-lysyl-[protein] + CoA. Its pathway is ketone degradation; acetoin degradation. This Bacillus subtilis (strain 168) protein is Dihydrolipoyllysine-residue acetyltransferase component of acetoin cleaving system (acoC).